The sequence spans 410 residues: Cysteine desulfurase IscS (410 aa).

Residues 80–81 (AT), N160, Q188, and 208–210 (SGH) each bind pyridoxal 5'-phosphate. K211 carries the post-translational modification N6-(pyridoxal phosphate)lysine. T248 is a binding site for pyridoxal 5'-phosphate. The active-site Cysteine persulfide intermediate is C334. C334 serves as a coordination point for [2Fe-2S] cluster.

It belongs to the class-V pyridoxal-phosphate-dependent aminotransferase family. NifS/IscS subfamily. In terms of assembly, homodimer. Forms a heterotetramer with IscU, interacts with other sulfur acceptors. Requires pyridoxal 5'-phosphate as cofactor.

It is found in the cytoplasm. The catalysed reaction is (sulfur carrier)-H + L-cysteine = (sulfur carrier)-SH + L-alanine. The protein operates within cofactor biosynthesis; iron-sulfur cluster biosynthesis. Functionally, master enzyme that delivers sulfur to a number of partners involved in Fe-S cluster assembly, tRNA modification or cofactor biosynthesis. Catalyzes the removal of elemental sulfur atoms from cysteine to produce alanine. Functions as a sulfur delivery protein for Fe-S cluster synthesis onto IscU, an Fe-S scaffold assembly protein, as well as other S acceptor proteins. In Rickettsia conorii (strain ATCC VR-613 / Malish 7), this protein is Cysteine desulfurase IscS.